The chain runs to 691 residues: Elongation factor G (691 aa).

Positions 12–286 constitute a tr-type G domain; sequence KKLRNIGIMA…GILEYLPSPL (275 aa). GTP is bound by residues 21-28, 85-89, and 139-142; these read AHIDAGKT, DTPGH, and NKMD.

This sequence belongs to the TRAFAC class translation factor GTPase superfamily. Classic translation factor GTPase family. EF-G/EF-2 subfamily.

The protein localises to the cytoplasm. In terms of biological role, catalyzes the GTP-dependent ribosomal translocation step during translation elongation. During this step, the ribosome changes from the pre-translocational (PRE) to the post-translocational (POST) state as the newly formed A-site-bound peptidyl-tRNA and P-site-bound deacylated tRNA move to the P and E sites, respectively. Catalyzes the coordinated movement of the two tRNA molecules, the mRNA and conformational changes in the ribosome. This Thermosipho africanus (strain TCF52B) protein is Elongation factor G.